Consider the following 387-residue polypeptide: Succinate--CoA ligase [ADP-forming] subunit beta (387 aa).

One can recognise an ATP-grasp domain in the interval 9 to 244; it reads KQLFASYGLP…VSQEDDRENR (236 aa). ATP is bound by residues K46, 53–55, E99, C102, and E107; that span reads GRG. Positions 199 and 213 each coordinate Mg(2+). Substrate is bound by residues N264 and 321–323; that span reads GIV.

Belongs to the succinate/malate CoA ligase beta subunit family. In terms of assembly, heterotetramer of two alpha and two beta subunits. Mg(2+) serves as cofactor.

It carries out the reaction succinate + ATP + CoA = succinyl-CoA + ADP + phosphate. It catalyses the reaction GTP + succinate + CoA = succinyl-CoA + GDP + phosphate. Its pathway is carbohydrate metabolism; tricarboxylic acid cycle; succinate from succinyl-CoA (ligase route): step 1/1. Its function is as follows. Succinyl-CoA synthetase functions in the citric acid cycle (TCA), coupling the hydrolysis of succinyl-CoA to the synthesis of either ATP or GTP and thus represents the only step of substrate-level phosphorylation in the TCA. The beta subunit provides nucleotide specificity of the enzyme and binds the substrate succinate, while the binding sites for coenzyme A and phosphate are found in the alpha subunit. The sequence is that of Succinate--CoA ligase [ADP-forming] subunit beta from Legionella pneumophila (strain Paris).